A 305-amino-acid chain; its full sequence is Acetylglutamate kinase (305 aa).

Residues 80–81, arginine 102, and asparagine 196 contribute to the substrate site; that span reads GG.

The protein belongs to the acetylglutamate kinase family. ArgB subfamily.

It is found in the cytoplasm. The enzyme catalyses N-acetyl-L-glutamate + ATP = N-acetyl-L-glutamyl 5-phosphate + ADP. It participates in amino-acid biosynthesis; L-arginine biosynthesis; N(2)-acetyl-L-ornithine from L-glutamate: step 2/4. Its function is as follows. Catalyzes the ATP-dependent phosphorylation of N-acetyl-L-glutamate. The protein is Acetylglutamate kinase of Chlorobium luteolum (strain DSM 273 / BCRC 81028 / 2530) (Pelodictyon luteolum).